The primary structure comprises 311 residues: Putative HTH-type transcriptional regulatory protein PTO0557 (311 aa).

The HTH cro/C1-type domain maps to 132 to 186 (MRRIRELKGYSVGYLSSKLGISRRSISLYESGSSATIDIYLKLEETLGEDLTKDI). The H-T-H motif DNA-binding region spans 143 to 162 (VGYLSSKLGISRRSISLYES).

The polypeptide is Putative HTH-type transcriptional regulatory protein PTO0557 (Picrophilus torridus (strain ATCC 700027 / DSM 9790 / JCM 10055 / NBRC 100828 / KAW 2/3)).